A 185-amino-acid polypeptide reads, in one-letter code: Ribosome-recycling factor (185 aa).

Belongs to the RRF family.

It is found in the cytoplasm. Responsible for the release of ribosomes from messenger RNA at the termination of protein biosynthesis. May increase the efficiency of translation by recycling ribosomes from one round of translation to another. The chain is Ribosome-recycling factor from Helicobacter pylori (strain Shi470).